Reading from the N-terminus, the 176-residue chain is Conidiation-specific protein 8 (176 aa).

2 disordered regions span residues 1–66 (MDDT…SKLI) and 79–162 (AASE…PQGF). A compositionally biased stretch (low complexity) spans 79-99 (AASEAFRSERSASTSSTTSET).

The chain is Conidiation-specific protein 8 (con-8) from Neurospora crassa (strain ATCC 24698 / 74-OR23-1A / CBS 708.71 / DSM 1257 / FGSC 987).